Consider the following 495-residue polypeptide: Probable cytosol aminopeptidase (495 aa).

Mn(2+) contacts are provided by Lys-266 and Asp-271. Residue Lys-278 is part of the active site. Mn(2+) contacts are provided by Asp-289, Asp-348, and Glu-350. The active site involves Arg-352.

This sequence belongs to the peptidase M17 family. The cofactor is Mn(2+).

It is found in the cytoplasm. It carries out the reaction Release of an N-terminal amino acid, Xaa-|-Yaa-, in which Xaa is preferably Leu, but may be other amino acids including Pro although not Arg or Lys, and Yaa may be Pro. Amino acid amides and methyl esters are also readily hydrolyzed, but rates on arylamides are exceedingly low.. It catalyses the reaction Release of an N-terminal amino acid, preferentially leucine, but not glutamic or aspartic acids.. Presumably involved in the processing and regular turnover of intracellular proteins. Catalyzes the removal of unsubstituted N-terminal amino acids from various peptides. The polypeptide is Probable cytosol aminopeptidase (Pseudomonas aeruginosa (strain UCBPP-PA14)).